Consider the following 251-residue polypeptide: Ubiquinone/menaquinone biosynthesis C-methyltransferase UbiE (251 aa).

S-adenosyl-L-methionine is bound by residues threonine 74, aspartate 95, and 123–124 (NA).

It belongs to the class I-like SAM-binding methyltransferase superfamily. MenG/UbiE family.

It catalyses the reaction a 2-demethylmenaquinol + S-adenosyl-L-methionine = a menaquinol + S-adenosyl-L-homocysteine + H(+). It carries out the reaction a 2-methoxy-6-(all-trans-polyprenyl)benzene-1,4-diol + S-adenosyl-L-methionine = a 5-methoxy-2-methyl-3-(all-trans-polyprenyl)benzene-1,4-diol + S-adenosyl-L-homocysteine + H(+). Its pathway is quinol/quinone metabolism; menaquinone biosynthesis; menaquinol from 1,4-dihydroxy-2-naphthoate: step 2/2. It functions in the pathway cofactor biosynthesis; ubiquinone biosynthesis. In terms of biological role, methyltransferase required for the conversion of demethylmenaquinol (DMKH2) to menaquinol (MKH2) and the conversion of 2-polyprenyl-6-methoxy-1,4-benzoquinol (DDMQH2) to 2-polyprenyl-3-methyl-6-methoxy-1,4-benzoquinol (DMQH2). The sequence is that of Ubiquinone/menaquinone biosynthesis C-methyltransferase UbiE from Shewanella baltica (strain OS223).